Here is a 108-residue protein sequence, read N- to C-terminus: UPF0060 membrane protein SA2130 (108 aa).

4 helical membrane passes run 5–25 (IFIF…IWLW), 31–51 (SSLV…IATF), 60–80 (VYAA…MVVD), and 86–106 (KYDV…LLPS).

The protein belongs to the UPF0060 family.

It is found in the cell membrane. The chain is UPF0060 membrane protein SA2130 from Staphylococcus aureus (strain N315).